We begin with the raw amino-acid sequence, 113 residues long: Large ribosomal subunit protein uL24 (113 aa).

Belongs to the universal ribosomal protein uL24 family. Part of the 50S ribosomal subunit.

One of two assembly initiator proteins, it binds directly to the 5'-end of the 23S rRNA, where it nucleates assembly of the 50S subunit. Functionally, one of the proteins that surrounds the polypeptide exit tunnel on the outside of the subunit. This chain is Large ribosomal subunit protein uL24, found in Synechococcus sp. (strain RCC307).